We begin with the raw amino-acid sequence, 197 residues long: MKKRRSKKERQELLQQTIETNPFITDEDLAEKFQVSIQTVRLDRMELSIPELRERIKHVATKQHEEDVKSLPLEEVVGEIIDIELDRHAISIFEVKVEHVFKRNQIARGHHLFAQANSLAVAVIDEELALTAKSTIRYIRPVKLGERVVAKARVEDVENDKGRTVVKVRSFVGEELVFTGTFEMYRSSNYSEEGNNL.

It belongs to the FapR family.

Transcriptional factor involved in regulation of membrane lipid biosynthesis by repressing genes involved in fatty acid and phospholipid metabolism. This is Transcription factor FapR from Bacillus anthracis (strain A0248).